The sequence spans 466 residues: 55 kDa erythrocyte membrane protein (466 aa).

Thr-2 carries the post-translational modification N-acetylthreonine. The residue at position 19 (Ser-19) is a Phosphoserine. The residue at position 49 (Thr-49) is a Phosphothreonine. Phosphoserine is present on residues Ser-57 and Ser-110. The PDZ domain occupies 71-152 (LIQFEKVTEE…MISLKVIPNQ (82 aa)). An SH3 domain is found at 158 to 228 (ALQMFMRAQF…PSPELQEWRV (71 aa)). Phosphoserine is present on Ser-243. Residues 268–466 (VVSYEEVVRL…PQWVPVSWVY (199 aa)) are interaction with PALS1. The 170-residue stretch at 282-451 (RKTLVLIGAS…TLKTLQETFD (170 aa)) folds into the Guanylate kinase-like domain.

Belongs to the MAGUK family. Heterodimer with PALS1. Interacts with DLG5 and NF2. Interacts (via guanylate kinase-like domain) with WHRN (via third PDZ domain). Interacts with PALS1. Post-translationally, palmitoylated.

Its subcellular location is the cell membrane. It is found in the cell projection. The protein resides in the stereocilium. Essential regulator of neutrophil polarity. Regulates neutrophil polarization by regulating AKT1 phosphorylation through a mechanism that is independent of PIK3CG activity. The sequence is that of 55 kDa erythrocyte membrane protein (MPP1) from Bos taurus (Bovine).